The primary structure comprises 122 residues: Large ribosomal subunit protein uL14c (122 aa).

Belongs to the universal ribosomal protein uL14 family. As to quaternary structure, part of the 50S ribosomal subunit.

The protein localises to the plastid. It is found in the chloroplast. Binds to 23S rRNA. This Calycanthus floridus var. glaucus (Eastern sweetshrub) protein is Large ribosomal subunit protein uL14c.